Reading from the N-terminus, the 125-residue chain is Small ribosomal subunit protein eS8 (125 aa).

Residues 1-30 (MTIFQGRATRKPSGGKLRPNHSKRRYELGR) form a disordered region.

Belongs to the eukaryotic ribosomal protein eS8 family. In terms of assembly, part of the 30S ribosomal subunit.

This is Small ribosomal subunit protein eS8 from Picrophilus torridus (strain ATCC 700027 / DSM 9790 / JCM 10055 / NBRC 100828 / KAW 2/3).